A 1390-amino-acid polypeptide reads, in one-letter code: DNA-directed RNA polymerase subunit beta'' (1390 aa).

4 residues coordinate Zn(2+): Cys-224, Cys-294, Cys-301, and Cys-304.

The protein belongs to the RNA polymerase beta' chain family. RpoC2 subfamily. In terms of assembly, in plastids the minimal PEP RNA polymerase catalytic core is composed of four subunits: alpha, beta, beta', and beta''. When a (nuclear-encoded) sigma factor is associated with the core the holoenzyme is formed, which can initiate transcription. The cofactor is Zn(2+).

It localises to the plastid. Its subcellular location is the chloroplast. It carries out the reaction RNA(n) + a ribonucleoside 5'-triphosphate = RNA(n+1) + diphosphate. In terms of biological role, DNA-dependent RNA polymerase catalyzes the transcription of DNA into RNA using the four ribonucleoside triphosphates as substrates. The chain is DNA-directed RNA polymerase subunit beta'' from Ceratophyllum demersum (Rigid hornwort).